The chain runs to 262 residues: Acyl-[acyl-carrier-protein]--UDP-N-acetylglucosamine O-acyltransferase (262 aa).

The protein belongs to the transferase hexapeptide repeat family. LpxA subfamily. Homotrimer.

Its subcellular location is the cytoplasm. The catalysed reaction is a (3R)-hydroxyacyl-[ACP] + UDP-N-acetyl-alpha-D-glucosamine = a UDP-3-O-[(3R)-3-hydroxyacyl]-N-acetyl-alpha-D-glucosamine + holo-[ACP]. Its pathway is glycolipid biosynthesis; lipid IV(A) biosynthesis; lipid IV(A) from (3R)-3-hydroxytetradecanoyl-[acyl-carrier-protein] and UDP-N-acetyl-alpha-D-glucosamine: step 1/6. Functionally, involved in the biosynthesis of lipid A, a phosphorylated glycolipid that anchors the lipopolysaccharide to the outer membrane of the cell. This is Acyl-[acyl-carrier-protein]--UDP-N-acetylglucosamine O-acyltransferase from Campylobacter concisus (strain 13826).